The chain runs to 306 residues: Eukaryotic translation initiation factor 2 subunit alpha (306 aa).

An S1 motif domain is found at 17–88 (DELVVVNVRQ…EKGYIDLSKR (72 aa)). Ser52 bears the Phosphoserine mark. Thr179 carries the post-translational modification Phosphothreonine. A phosphoserine mark is found at Ser273, Ser295, Ser303, and Ser305.

This sequence belongs to the eIF-2-alpha family. As to quaternary structure, eukaryotic translation initiation factor 2 eIF2 is a heterotrimeric complex composed of an alpha, a beta and a gamma subunit.

It is found in the cytoplasm. The protein resides in the cytosol. EIF-2 functions in the early steps of protein synthesis by forming a ternary complex with GTP and initiator tRNA. This complex binds to a 40S ribosomal subunit, followed by mRNA binding to form a 43S pre-initiation complex. Junction of the 60S ribosomal subunit to form the 80S initiation complex is preceded by hydrolysis of the GTP bound to eIF-2 and release of an eIF-2-GDP binary complex. In order for eIF-2 to recycle and catalyze another round of initiation, the GDP bound to eIF-2 must exchange with GTP by way of a reaction catalyzed by eIF2B. In Schizosaccharomyces pombe (strain 972 / ATCC 24843) (Fission yeast), this protein is Eukaryotic translation initiation factor 2 subunit alpha (tif211).